The chain runs to 506 residues: Cobyric acid synthase (506 aa).

Positions 260–453 (KVGVAAIYFP…FHGIFNEPAV (194 aa)) constitute a GATase cobBQ-type domain. Residue Cys-341 is the Nucleophile of the active site. His-445 is a catalytic residue.

This sequence belongs to the CobB/CobQ family. CobQ subfamily.

The protein operates within cofactor biosynthesis; adenosylcobalamin biosynthesis. Catalyzes amidations at positions B, D, E, and G on adenosylcobyrinic A,C-diamide. NH(2) groups are provided by glutamine, and one molecule of ATP is hydrogenolyzed for each amidation. The polypeptide is Cobyric acid synthase (Chlorobium chlorochromatii (strain CaD3)).